The chain runs to 255 residues: uncharacterized protein (255 aa).

The signal sequence occupies residues 1-23 (MKRLNKLVLGINLLFLVISITAG). Residue cysteine 24 is the site of N-palmitoyl cysteine attachment. The S-diacylglycerol cysteine moiety is linked to residue cysteine 24.

The protein belongs to the staphylococcal tandem lipoprotein family.

The protein localises to the cell membrane. This is an uncharacterized protein from Staphylococcus aureus (strain MRSA252).